Consider the following 219-residue polypeptide: Uracil-DNA glycosylase (219 aa).

Asp61 (proton acceptor) is an active-site residue.

Belongs to the uracil-DNA glycosylase (UDG) superfamily. UNG family.

It is found in the cytoplasm. The enzyme catalyses Hydrolyzes single-stranded DNA or mismatched double-stranded DNA and polynucleotides, releasing free uracil.. Functionally, excises uracil residues from the DNA which can arise as a result of misincorporation of dUMP residues by DNA polymerase or due to deamination of cytosine. This chain is Uracil-DNA glycosylase, found in Neisseria meningitidis serogroup A / serotype 4A (strain DSM 15465 / Z2491).